We begin with the raw amino-acid sequence, 298 residues long: tRNA-uridine aminocarboxypropyltransferase 2 (298 aa).

Met1 carries the post-translational modification N-acetylmethionine. Residues 1–52 are disordered; it reads MESQKEARILQEPVARPPGASRSQTPNAKERQEGGPVPAAAALGAEADDDSA. Ser132 bears the Phosphoserine mark. Residues 178-181 carry the DXTW motif; that stretch reads DGTW.

Belongs to the TDD superfamily. DTWD2 family.

Its subcellular location is the nucleus. The protein localises to the cytoplasm. The catalysed reaction is a uridine in tRNA + S-adenosyl-L-methionine = a 3-[(3S)-3-amino-3-carboxypropyl]uridine in tRNA + S-methyl-5'-thioadenosine + H(+). In terms of biological role, catalyzes the formation of 3-(3-amino-3-carboxypropyl)uridine (acp3U) at position 20a in the D-loop of several cytoplasmic tRNAs (acp3U(20a)). Also has a weak activity to form acp3U at position 20 in the D-loop of tRNAs (acp3U(20)). Involved in glycoRNA biosynthesis by mediating formation of acp3U, which acts as an attachment site for N-glycans on tRNAs. GlycoRNAs consist of RNAs modified with secretory N-glycans that are presented on the cell surface. The sequence is that of tRNA-uridine aminocarboxypropyltransferase 2 from Macaca fascicularis (Crab-eating macaque).